The following is a 937-amino-acid chain: Glycine dehydrogenase (decarboxylating) (937 aa).

Position 686 is an N6-(pyridoxal phosphate)lysine (Lys-686).

Belongs to the GcvP family. The glycine cleavage system is composed of four proteins: P, T, L and H. It depends on pyridoxal 5'-phosphate as a cofactor.

The enzyme catalyses N(6)-[(R)-lipoyl]-L-lysyl-[glycine-cleavage complex H protein] + glycine + H(+) = N(6)-[(R)-S(8)-aminomethyldihydrolipoyl]-L-lysyl-[glycine-cleavage complex H protein] + CO2. Its function is as follows. The glycine cleavage system catalyzes the degradation of glycine. The P protein binds the alpha-amino group of glycine through its pyridoxal phosphate cofactor; CO(2) is released and the remaining methylamine moiety is then transferred to the lipoamide cofactor of the H protein. The protein is Glycine dehydrogenase (decarboxylating) of Mesorhizobium japonicum (strain LMG 29417 / CECT 9101 / MAFF 303099) (Mesorhizobium loti (strain MAFF 303099)).